The chain runs to 429 residues: Uracil permease (429 aa).

Topologically, residues 1 to 13 (MTRRAIGVSERPP) are cytoplasmic. The helical transmembrane segment at 14 to 37 (LLQTIPLSLQHLFAMFGATVLVPV) threads the bilayer. Topologically, residues 38-41 (LFHI) are periplasmic. A helical membrane pass occupies residues 42-61 (NPATVLLFNGIGTLLYLFIC). The Cytoplasmic segment spans residues 62–64 (KGK). A discontinuously helical transmembrane segment spans residues 65 to 81 (IPAYLGSSFAFISPVLL). Residue Phe-73 participates in uracil binding. Residues 82 to 89 (LLPLGYEV) are Periplasmic-facing. The helical transmembrane segment at 90–110 (ALGGFIMCGVLFCLVSFIVKK) threads the bilayer. The Cytoplasmic portion of the chain corresponds to 111-122 (AGTGWLDVLFPP). Residues 123–144 (AAMGAIVAVIGLELAGVAAGMA) form a helical membrane-spanning segment. Residues 145-155 (GLLPAEGQTPD) are Periplasmic-facing. A helical transmembrane segment spans residues 156–171 (SKTIIISITTLAVTVL). Residues 172–178 (GSVLFRG) lie on the Cytoplasmic side of the membrane. A helical membrane pass occupies residues 179 to 199 (FLAIIPILIGVLVGYALSFAM). Topologically, residues 200–224 (GIVDTTPIINAHWFALPTLYTPRFE) are periplasmic. Residues 225 to 248 (WFAILTILPAALVVIAEHVGHLVV) form a helical membrane-spanning segment. Glu-241 contacts uracil. The Cytoplasmic segment spans residues 249 to 261 (TANIVKKDLLRDP). The helical transmembrane segment at 262-281 (GLHRSMFANGLSTVISGFFG) threads the bilayer. Residues 282–298 (STPNTTYGENIGVMAIT) form a discontinuously helical membrane-spanning segment. Uracil contacts are provided by Gly-289 and Glu-290. Residues 299-301 (RVY) are Cytoplasmic-facing. A helical transmembrane segment spans residues 302–319 (STWVIGGAAIFAILLSCV). The Periplasmic segment spans residues 320–332 (GKLAAAIQMIPLP). Residues 333–354 (VMGGVSLLLYGVIGASGIRVLI) form a helical membrane-spanning segment. Residues 355 to 365 (ESKVDYNKAQN) are Cytoplasmic-facing. An intramembrane region (discontinuously helical) is located at residues 366 to 401 (LILTSVILIIGVSGAKVNIGAAELKGMALATIVGIG). Residues 402-429 (LSLIFKLISVLRPEEVVLDAEDADITDK) lie on the Cytoplasmic side of the membrane.

It belongs to the nucleobase:cation symporter-2 (NCS2) (TC 2.A.40) family.

The protein resides in the cell inner membrane. It carries out the reaction uracil(in) + H(+)(in) = uracil(out) + H(+)(out). Transport of uracil in the cell. The sequence is that of Uracil permease (uraA) from Escherichia coli O157:H7.